The primary structure comprises 211 residues: uncharacterized protein (211 aa).

It belongs to the nucleoside deoxyribosyltransferase family.

It is found in the cytoplasm. It localises to the nucleus. This is an uncharacterized protein from Schizosaccharomyces pombe (strain 972 / ATCC 24843) (Fission yeast).